A 428-amino-acid chain; its full sequence is Peptidase B (428 aa).

Mn(2+) contacts are provided by lysine 195 and aspartate 200. Lysine 207 is an active-site residue. Mn(2+) is bound by residues aspartate 218, aspartate 277, and glutamate 279. Arginine 281 is an active-site residue.

This sequence belongs to the peptidase M17 family. Homohexamer. The cofactor is Mn(2+).

It is found in the cytoplasm. The catalysed reaction is Release of an N-terminal amino acid, Xaa, from a peptide or arylamide. Xaa is preferably Glu or Asp but may be other amino acids, including Leu, Met, His, Cys and Gln.. In terms of biological role, probably plays an important role in intracellular peptide degradation. This is Peptidase B from Klebsiella pneumoniae (strain 342).